We begin with the raw amino-acid sequence, 430 residues long: Tol-Pal system protein TolB (430 aa).

Residues 1–21 form the signal peptide; the sequence is MKQALRVAFGFLMLWAAVLHA.

Belongs to the TolB family. In terms of assembly, the Tol-Pal system is composed of five core proteins: the inner membrane proteins TolA, TolQ and TolR, the periplasmic protein TolB and the outer membrane protein Pal. They form a network linking the inner and outer membranes and the peptidoglycan layer.

The protein resides in the periplasm. Functionally, part of the Tol-Pal system, which plays a role in outer membrane invagination during cell division and is important for maintaining outer membrane integrity. TolB occupies a key intermediary position in the Tol-Pal system because it communicates directly with both membrane-embedded components, Pal in the outer membrane and TolA in the inner membrane. The protein is Tol-Pal system protein TolB of Klebsiella pneumoniae (strain 342).